The sequence spans 630 residues: 1-deoxy-D-xylulose-5-phosphate synthase (630 aa).

Thiamine diphosphate contacts are provided by residues histidine 72 and 113-115 (GHS). Aspartate 144 is a Mg(2+) binding site. Thiamine diphosphate is bound by residues 145-146 (GA), asparagine 173, tyrosine 284, and glutamate 367. Mg(2+) is bound at residue asparagine 173.

The protein belongs to the transketolase family. DXPS subfamily. As to quaternary structure, homodimer. The cofactor is Mg(2+). Thiamine diphosphate serves as cofactor.

The catalysed reaction is D-glyceraldehyde 3-phosphate + pyruvate + H(+) = 1-deoxy-D-xylulose 5-phosphate + CO2. The protein operates within metabolic intermediate biosynthesis; 1-deoxy-D-xylulose 5-phosphate biosynthesis; 1-deoxy-D-xylulose 5-phosphate from D-glyceraldehyde 3-phosphate and pyruvate: step 1/1. Functionally, catalyzes the acyloin condensation reaction between C atoms 2 and 3 of pyruvate and glyceraldehyde 3-phosphate to yield 1-deoxy-D-xylulose-5-phosphate (DXP). The protein is 1-deoxy-D-xylulose-5-phosphate synthase of Bacillus cereus (strain ATCC 10987 / NRS 248).